We begin with the raw amino-acid sequence, 253 residues long: Probable transcriptional regulatory protein A1G_04400 (253 aa).

The interval 1 to 21 (MAGHSKFKNIQHRKGAQDKKR) is disordered.

This sequence belongs to the TACO1 family.

It is found in the cytoplasm. The sequence is that of Probable transcriptional regulatory protein A1G_04400 from Rickettsia rickettsii (strain Sheila Smith).